We begin with the raw amino-acid sequence, 313 residues long: tRNA dimethylallyltransferase (313 aa).

ATP is bound at residue 9–16 (GPTASGKT). Residue 11–16 (TASGKT) participates in substrate binding. The interval 34–37 (DSMQ) is interaction with substrate tRNA.

This sequence belongs to the IPP transferase family. Monomer. The cofactor is Mg(2+).

It catalyses the reaction adenosine(37) in tRNA + dimethylallyl diphosphate = N(6)-dimethylallyladenosine(37) in tRNA + diphosphate. Catalyzes the transfer of a dimethylallyl group onto the adenine at position 37 in tRNAs that read codons beginning with uridine, leading to the formation of N6-(dimethylallyl)adenosine (i(6)A). This chain is tRNA dimethylallyltransferase, found in Acetivibrio thermocellus (strain ATCC 27405 / DSM 1237 / JCM 9322 / NBRC 103400 / NCIMB 10682 / NRRL B-4536 / VPI 7372) (Clostridium thermocellum).